A 468-amino-acid polypeptide reads, in one-letter code: UDP-N-acetylmuramate--L-alanine ligase (468 aa).

117 to 123 serves as a coordination point for ATP; it reads GTHGKTT.

This sequence belongs to the MurCDEF family.

Its subcellular location is the cytoplasm. The catalysed reaction is UDP-N-acetyl-alpha-D-muramate + L-alanine + ATP = UDP-N-acetyl-alpha-D-muramoyl-L-alanine + ADP + phosphate + H(+). It participates in cell wall biogenesis; peptidoglycan biosynthesis. Cell wall formation. This Maricaulis maris (strain MCS10) (Caulobacter maris) protein is UDP-N-acetylmuramate--L-alanine ligase.